Here is a 343-residue protein sequence, read N- to C-terminus: 4-hydroxy-2-oxovalerate aldolase (343 aa).

Positions 4 to 254 (PRLTDTTLRD…NPGLDVFGLM (251 aa)) constitute a Pyruvate carboxyltransferase domain. Substrate is bound at residue 12–13 (RD). Mn(2+) is bound at residue Asp13. The active-site Proton acceptor is the His16. Substrate-binding residues include Ser166 and His193. His193 and His195 together coordinate Mn(2+). Substrate is bound at residue Tyr284.

The protein belongs to the 4-hydroxy-2-oxovalerate aldolase family.

It carries out the reaction (S)-4-hydroxy-2-oxopentanoate = acetaldehyde + pyruvate. In Chloroflexus aggregans (strain MD-66 / DSM 9485), this protein is 4-hydroxy-2-oxovalerate aldolase.